A 155-amino-acid polypeptide reads, in one-letter code: Regulatory protein RecX (155 aa).

Belongs to the RecX family.

Its subcellular location is the cytoplasm. Functionally, modulates RecA activity. In Pseudomonas syringae pv. tomato (strain ATCC BAA-871 / DC3000), this protein is Regulatory protein RecX.